The following is a 220-amino-acid chain: Ribosome maturation factor RimP (220 aa).

Positions 1–15 are enriched in low complexity; the sequence is MSQRGRATRPTGPTG. Disordered regions lie at residues 1–35 and 184–220; these read MSQRGRATRPTGPTGRPRRTGGQRSAGRVSRGGDL and PGRVQVEFTRPGETDGADGADEAGDFDDDDDVEGEER. Residues 198–220 show a composition bias toward acidic residues; it reads DGADGADEAGDFDDDDDVEGEER.

Belongs to the RimP family.

It localises to the cytoplasm. Functionally, required for maturation of 30S ribosomal subunits. This chain is Ribosome maturation factor RimP, found in Salinispora tropica (strain ATCC BAA-916 / DSM 44818 / JCM 13857 / NBRC 105044 / CNB-440).